A 151-amino-acid chain; its full sequence is MEPESIEICPYNPHHRIPLSRFQYHLASCRKKNPKKAKKMASCKYNACHVVPIRKLAEHEATCVNRSSVEEEDTLGPLQVSLPQPQNQDTLQVRWLSNPDIWNVDGANCHPMFVLKSFVPQKLVCESDIQESRGGDQCPEDPQTRTRKANF.

CHHC U11-48K-type zinc fingers lie at residues 6–33 and 40–67; these read IEICPYNPHHRIPLSRFQYHLASCRKKN and MASCKYNACHVVPIRKLAEHEATCVNRS. Zn(2+) is bound by residues Cys-9, His-15, His-25, Cys-29, Cys-43, His-49, His-59, and Cys-63. The disordered stretch occupies residues 130-151; that stretch reads QESRGGDQCPEDPQTRTRKANF.

It belongs to the UPF0224 (FAM112) family.

In Mus musculus (Mouse), this protein is Gametocyte-specific factor 1-like (Gtsf1l).